Reading from the N-terminus, the 714-residue chain is A-kinase anchor protein 5 (714 aa).

Disordered regions lie at residues 1–146 (METS…GYVR) and 243–333 (VLEN…VGHT). Residues 1-164 (METSVSEIQI…EIKAQIQPDE (164 aa)) are essential to the intracellular anchoring function. Phosphoserine is present on residues Ser-4 and Ser-22. A compositionally biased stretch (basic and acidic residues) spans 10–32 (IETKDEKRPEAASPQKERQERKT). Cys-36 carries the S-palmitoyl cysteine lipid modification. Basic residues predominate over residues 37–50 (FKRRKKVNKKKAKA). 2 stretches are compositionally biased toward basic and acidic residues: residues 54 to 63 (TAEETEKHAP) and 88 to 100 (KPSE…KPSE). An AKAP CaM-binding motif is present at residues 74-94 (AGAWASIKRLVTHRKPSESAE). The S-palmitoyl cysteine moiety is linked to residue Cys-123. Polar residues predominate over residues 243 to 268 (VLENSAADSPQPVTSTAPLSPATTHQ). Positions 285–301 (GKDDGRRKTAAEEKKSG) are enriched in basic and acidic residues. A 1; approximate repeat occupies 305–312 (LGQAEEAS). Positions 305-597 (LGQAEEASSV…PIVGQAEETV (293 aa)) are 28 X 8 AA repeats of V-G-Q-A-E-E-A-T. The span at 310-323 (EASSVSQADKSVLS) shows a compositional bias: polar residues. The 2; approximate repeat unit spans residues 322–329 (LSQAEEAT). Residues 330 to 337 (VGHTEEAT) form a 3; approximate repeat. The stretch at 350–357 (LSQAEEAT) is one 4; approximate repeat. The stretch at 358–365 (VAQAKETV) is one 5; approximate repeat. The stretch at 366-373 (LSQAEEVK) is one 6; approximate repeat. A 7; approximate repeat occupies 398–405 (VSQAEEAI). An 8; approximate repeat occupies 414–421 (MGQAEEAT). 5 consecutive repeat copies span residues 430–437 (VGQAEEAT), 438–445 (VGQAEEAT), 446–453 (VGQAEEAT), 454–461 (VGQAEEAT), and 462–469 (VGQAEEAT). A 14; approximate repeat occupies 470-477 (VGQAGEAT). A 15; approximate repeat occupies 486-493 (VGQAEEAI). Tandem repeats lie at residues 494–501 (VGQAEEAT), 502–509 (VGQAEEAT), 510–517 (VGQAEEAT), and 518–525 (VGQAEEAT). A 20; approximate repeat occupies 526–533 (VDQAEEAT). The stretch at 534 to 541 (VGQAEEAT) is repeat 21. The stretch at 542 to 549 (VGQAGEAA) is one 22; approximate repeat. One copy of the 23; approximate repeat lies at 550 to 557 (VGQAEEAI). A 24; approximate repeat occupies 558–565 (VAQAEEAT). Copy 25 of the repeat occupies 566–573 (VGQAGEAT). Residues 574 to 581 (VGQAEKAT) form a 26; approximate repeat. The stretch at 582 to 589 (VGQAEEPI) is one 27; approximate repeat. The 28; approximate repeat unit spans residues 590 to 597 (VGQAEETV). An RII-beta subunit binding domain region spans residues 675 to 696 (YETLLIETASSLVKNAIELSVE). The segment at 697–714 (QLVNEMVSEDNQINTLFQ) is tethers NFATC2 to CRAC channels.

As to quaternary structure, binding protein for dimer of the RII-beta regulatory subunit of cAMP-dependent protein kinase (PKA) and also for the protein kinase C (PKC) and the phosphatase calcineurin (PP2B). Each enzyme is inhibited when bound to the anchoring protein. Also binds the beta2-adrenergic receptor. Part of a complex containing AKAP5, ADCY5, ADCY6 and PDE4C. Interacts with ADCY8, and enhances its phosphorylation at lipid rafts. Interacts with ORAI1 (isoform alpha) (via N-terminus) upon store depletion and in response to LTC4. Does not interact with ORAI2 and ORAI3 paralogs. Interacts (via leucine zipper domain) with NFATC2/NFAT1. Interacts with calmodulin; the interaction is calcium-independent. Interacts with KCNQ2; the interaction may help KCNQ2 channel complex to retain calcium-bound calmodulin. Interacts with KCNK2; the channel is recruited to postsynaptic microdomains by AKAP5 where it can integrate neurotransmitter receptor signals. Part of a complex composed of AKAP5 and ADRB2. Post-translationally, palmitoylated. Palmitoylation at Cys-36 and Cys-123 plays a key role in the targeting of AKAP5 to lipid rafts. Palmitoylation by ZDHHC2 is required for AKAP5 function in LTP-stimulated recycling endosome exocytosis.

It is found in the postsynaptic recycling endosome membrane. The protein resides in the cell projection. Its subcellular location is the dendrite. It localises to the postsynaptic cell membrane. In terms of biological role, multivalent scaffold protein that anchors the cAMP-dependent protein kinase/PKA to cytoskeletal and/or organelle-associated proteins, targeting the signal carried by cAMP to specific intracellular effectors. Association with the beta2-adrenergic receptor (beta2-AR) not only regulates beta2-AR signaling pathway, but also the activation by PKA by switching off the beta2-AR signaling cascade. Plays a role in long term synaptic potentiation by regulating protein trafficking from the dendritic recycling endosomes to the plasma membrane and controlling both structural and functional plasticity at excitatory synapses. In hippocampal pyramidal neurons, recruits KCNK2/TREK-1 channel at postsynaptic dense bodies microdomains and converts it to a leak channel no longer sensitive to stimulation by arachidonic acid, acidic pH or mechanical stress, nor inhibited by Gq-coupled receptors but still under the negative control of Gs-coupled receptors. Associates with ORAI1 pore-forming subunit of CRAC channels in Ca(2+) signaling microdomains where it recruits NFATC2/NFAT1 and couples store-operated Ca(2+) influx to calmodulin and calcineurin signaling and activation of NFAT-dependent transcriptional responses. This is A-kinase anchor protein 5 (Akap5) from Rattus norvegicus (Rat).